Reading from the N-terminus, the 1192-residue chain is DNA ligase 1 (1192 aa).

2 disordered regions span residues 29–257 (ELNK…KEKE) and 280–517 (EKEL…KSTQ). Residues 42-56 (EAVVKEKVEKKEKKE) are compositionally biased toward basic and acidic residues. Over residues 70-113 (EEEEEEQEEQDGEEEQEEEEEYQQQDEEIEEDINGEEEMELDEN) the composition is skewed to acidic residues. Positions 141–155 (KTIENKETKKPEKQS) are enriched in basic and acidic residues. The span at 172–198 (DDEEDEEDENKTDDNDLDDMLDDDSDN) shows a compositional bias: acidic residues. 2 stretches are compositionally biased toward basic and acidic residues: residues 199 to 257 (EKDS…KEKE) and 280 to 368 (EKEL…RANA). Low complexity-rich tracts occupy residues 371–382 (KSSVPTSTSKNS) and 410–434 (STTT…ISSP). Basic and acidic residues predominate over residues 435–467 (SKKEEKEVITSKKQVEATKVEVKKEKEKEKEKE). The span at 468 to 511 (KEDDEEEEEEEEDDDEKLEDIDEEEYEEEEEEDEEGISENEEEE) shows a compositional bias: acidic residues. Positions 724–733 (KLRIGLAERS) are interaction with target DNA. Glu842 serves as a coordination point for ATP. The N6-AMP-lysine intermediate role is filled by Lys844. Positions 849 and 865 each coordinate ATP. Residue Glu897 participates in Mg(2+) binding. Residues 918 to 920 (ARK) form an interaction with target DNA region. Glu996 serves as a coordination point for Mg(2+). ATP is bound by residues Lys1001, Arg1014, and Lys1020. The disordered stretch occupies residues 1157-1192 (DKSPEDATSSDQVVDMYQNQKINSQSSKINEKDEDY). The segment covering 1162-1184 (DATSSDQVVDMYQNQKINSQSSK) has biased composition (polar residues).

Belongs to the ATP-dependent DNA ligase family. Mg(2+) is required as a cofactor.

The protein resides in the nucleus. It catalyses the reaction ATP + (deoxyribonucleotide)n-3'-hydroxyl + 5'-phospho-(deoxyribonucleotide)m = (deoxyribonucleotide)n+m + AMP + diphosphate.. In terms of biological role, DNA ligase that seals nicks in double-stranded DNA during DNA replication, DNA recombination and DNA repair. This chain is DNA ligase 1 (lig1), found in Dictyostelium discoideum (Social amoeba).